The following is a 330-amino-acid chain: MKKPIVAVIAGGYSGEHSVSLKSAAGILSWLGSEPFSAFLVLIERDRWSVRVSEQREVPLDKNDFSFDLDDERIRFDYAYITIHGTPGENGLLQGYLDMIGIPYNTGDTLVESLTFNKYVCNRFLSGFGIRIADSMRLTGRDTQPDVADLTARMGLPLFVKPNVGGSSIATTKVVEAAQLLPAIGQAFSEGEEVMIERLICGTEVTCGAFLRKKEVVALPVTEVVAHNEFFDFDAKYNGAVEEITPARISDEATRLIQTMTARIYELLNARGIIRVDYIIEADGIPTLLEVNTTPGMTPTSFIPQQVRAAEMDMKEVLCTIIRDGLNETQ.

The region spanning 122–323 (NRFLSGFGIR…MKEVLCTIIR (202 aa)) is the ATP-grasp domain. 151-206 (TARMGLPLFVKPNVGGSSIATTKVVEAAQLLPAIGQAFSEGEEVMIERLICGTEVT) contributes to the ATP binding site. Mg(2+) is bound by residues Asp-277, Glu-290, and Asn-292.

This sequence belongs to the D-alanine--D-alanine ligase family. The cofactor is Mg(2+). Mn(2+) serves as cofactor.

It is found in the cytoplasm. It catalyses the reaction 2 D-alanine + ATP = D-alanyl-D-alanine + ADP + phosphate + H(+). It participates in cell wall biogenesis; peptidoglycan biosynthesis. Functionally, cell wall formation. In Porphyromonas gingivalis (strain ATCC 33277 / DSM 20709 / CIP 103683 / JCM 12257 / NCTC 11834 / 2561), this protein is D-alanine--D-alanine ligase.